A 968-amino-acid polypeptide reads, in one-letter code: Glycine dehydrogenase (decarboxylating) (968 aa).

Lys-713 bears the N6-(pyridoxal phosphate)lysine mark.

This sequence belongs to the GcvP family. The glycine cleavage system is composed of four proteins: P, T, L and H. Requires pyridoxal 5'-phosphate as cofactor.

The enzyme catalyses N(6)-[(R)-lipoyl]-L-lysyl-[glycine-cleavage complex H protein] + glycine + H(+) = N(6)-[(R)-S(8)-aminomethyldihydrolipoyl]-L-lysyl-[glycine-cleavage complex H protein] + CO2. The glycine cleavage system catalyzes the degradation of glycine. The P protein binds the alpha-amino group of glycine through its pyridoxal phosphate cofactor; CO(2) is released and the remaining methylamine moiety is then transferred to the lipoamide cofactor of the H protein. This is Glycine dehydrogenase (decarboxylating) from Variovorax paradoxus (strain S110).